A 112-amino-acid chain; its full sequence is uncharacterized protein (112 aa).

Residues 85 to 105 (IVQLIILFAIIITNPNAIELI) traverse the membrane as a helical segment.

This sequence belongs to the M.jannaschii MJ0023/MJ0349/MJ1072/MJ1074/MJ1107/MJECL16 family.

It is found in the membrane. This is an uncharacterized protein from Methanocaldococcus jannaschii (strain ATCC 43067 / DSM 2661 / JAL-1 / JCM 10045 / NBRC 100440) (Methanococcus jannaschii).